The following is a 564-amino-acid chain: Kelch-like protein 12 (564 aa).

The BTB domain maps to 29 to 96 (CDVTLRVNLK…VYTETVHVTV (68 aa)). The 102-residue stretch at 131–232 (CLGIRDFAET…LTPRYITDVI (102 aa)) folds into the BACK domain. Kelch repeat units follow at residues 278–325 (VLLV…SLGD), 327–375 (VYVI…TLGD), 376–422 (MIYV…VANG), 423–469 (VIYC…LLND), 471–516 (IYVV…VLRG), and 518–563 (LYAI…VLRE).

As to quaternary structure, component of the BCR(KLHL12) E3 ubiquitin ligase complex.

It localises to the cytoplasmic vesicle. The protein localises to the COPII-coated vesicle. Its pathway is protein modification; protein ubiquitination. In terms of biological role, substrate-specific adapter of a BCR (BTB-CUL3-RBX1) E3 ubiquitin ligase complex that acts as a negative regulator of Wnt signaling pathway and ER-Golgi transport. The BCR(KLHL12) complex is involved in ER-Golgi transport by regulating the size of COPII coats, thereby playing a key role in collagen export, which is required for embryonic stem (ES) cells division. The protein is Kelch-like protein 12 (klhl12) of Xenopus laevis (African clawed frog).